The sequence spans 163 residues: Large ribosomal subunit protein uL11 (163 aa).

A disordered region spans residues 1 to 25 (MAGTIEVLVAGGQADPGPPLGPELG).

This sequence belongs to the universal ribosomal protein uL11 family. Part of the ribosomal stalk of the 50S ribosomal subunit. Interacts with L10 and the large rRNA to form the base of the stalk. L10 forms an elongated spine to which L12 dimers bind in a sequential fashion forming a multimeric L10(L12)X complex.

Forms part of the ribosomal stalk which helps the ribosome interact with GTP-bound translation factors. This chain is Large ribosomal subunit protein uL11, found in Natronomonas pharaonis (strain ATCC 35678 / DSM 2160 / CIP 103997 / JCM 8858 / NBRC 14720 / NCIMB 2260 / Gabara) (Halobacterium pharaonis).